The sequence spans 416 residues: MFADLDYDIEEDKLGIPTVPGKVTLQKDAQNLIGISIGGGAQYCPCLYIVQVFDNTPAALDGTVAAGDEITGVNGKSIKGKTKVEVAKMIQEVKGEVTIHYNKLQADPKQGMSLDIVLKKVKHRLVENMSSGTADALGLSRAILCNDGLVKRLEELERTAELYKGMTEHTKNLLRAFYELSQTHRAFGDVFSVIGVREPQPAASEAFVKFADAHRSIEKFGIRLLKTIKPMLTDLNTYLNKAIPDTRLTIKKYLDVKFEYLSYCLKVKEMDDEEYSCIGPRRALYRVSTGNYEYRLILRCRQEARARFSQMRKDVLEKMELLDQKHVQDIVFQLQRFVSTMSKYYNDCYAVLQDADVFPIEVDLAHTTLAYGPNQGSFTDGEEEDEEEEDGAAREVSKDACGATGPTDKGGSWCDS.

In terms of domain architecture, PDZ spans 22–105; sequence KVTLQKDAQN…EVTIHYNKLQ (84 aa). Zn(2+) contacts are provided by Cys44 and Cys46. Thr82 bears the Phosphothreonine mark. Residues 144–357 enclose the AH domain; that stretch reads LCNDGLVKRL…CYAVLQDADV (214 aa). The tract at residues 373 to 416 is disordered; it reads PNQGSFTDGEEEDEEEEDGAAREVSKDACGATGPTDKGGSWCDS. The segment covering 380 to 390 has biased composition (acidic residues); the sequence is DGEEEDEEEED. A lipid anchor (S-palmitoyl cysteine; by DHHC8) is attached at Cys414.

Monomer and homodimer. Interacts with CXADR. Interacts presynaptically with the glutamate receptors GRIA2, GRIA3, GRIK3, isoform 3 of GRIA4, isoform A of GRM4, GRM7 and GRM8; with NAPA and NAPB; and with BTG2. The interaction with NAPA and NAPB disrupts the interaction with GRIA2, conducting to the internalization of GRIA2. Interacts with PRKCA; with the amine transporters SLC6A2 and SLC6A3; with the channels ASIC1 and ASIC2; with the GTP-binding proteins ARF1 and ARF3; with the ephrin receptor tyrosine kinases EPHA7, EPHB1 and EPHB2; with ERBB2 and through its PDZ domain with the C-terminal tail of PRLHR. Interacts with UNC5A. Interacts (via AH domain) with NCS1/FREQ; in a calcium-dependent manner. Interacts with F-actin and associates with the ARP2/3 complex. Interacts (via PDZ domain) with ARF1 (activated); the interaction blocks Arp2/3 complex inhibition. Interacts with SORCS3. Phosphorylation at Thr-82 appears to inhibit the interaction with AMPA receptors. Phosphorylated on tyrosine residues by EPHB2 and on serine or threonine residues by PKC. Post-translationally, palmitoylation on Cys-414 is essential for long-term synaptic depression (LTD). Expressed in all tissues examined, with highest levels in brain and testes and lowest levels in lung.

The protein localises to the cytoplasm. The protein resides in the perinuclear region. Its subcellular location is the membrane. It localises to the postsynaptic density. It is found in the synapse. The protein localises to the synaptosome. The protein resides in the cytoskeleton. Its function is as follows. Probable adapter protein that bind to and organize the subcellular localization of a variety of membrane proteins containing some PDZ recognition sequence. Involved in the clustering of various receptors, possibly by acting at the receptor internalization level. Plays a role in synaptic plasticity by regulating the trafficking and internalization of AMPA receptors. May be regulated upon PRKCA activation. May regulate ASIC1/ASIC3 channel. Regulates actin polymerization by inhibiting the actin-nucleating activity of the Arp2/3 complex; the function is competitive with nucleation promoting factors and is linked to neuronal morphology regulation and AMPA receptor (AMPAR) endocytosis. Via interaction with the Arp2/3 complex involved in regulation of synaptic plasicity of excitatory synapses and required for spine shrinkage during long-term depression (LTD). Involved in regulation of astrocyte morphology, antagonistic to Arp2/3 complex activator WASL/N-WASP function. The polypeptide is PRKCA-binding protein (Pick1) (Mus musculus (Mouse)).